The following is a 485-amino-acid chain: Mitochondrial metalloendopeptidase OMA1 (485 aa).

A mitochondrion-targeting transit peptide spans 1 to 16; sequence MKPSLKRRLLLLSRKF. The Mitochondrial matrix segment spans residues 17–147; sequence AKASIRKLLR…GPGRWFQNPR (131 aa). The chain crosses the membrane as a helical span at residues 148–168; it reads TVFTVVLVGSVGLITLIVGNT. Over 169–485 the chain is Mitochondrial intermembrane; the sequence is ETIPYTKRTH…AGRTGVEGFL (317 aa). Histidine 352 contributes to the Zn(2+) binding site. Residue glutamate 353 is part of the active site. Zn(2+) contacts are provided by histidine 356 and glutamate 405. Positions 456 to 485 are required for protease activation; sequence KLLAQANVMEEALMIYREVQAGRTGVEGFL.

It belongs to the peptidase M48A family. In terms of assembly, homooligomer. It depends on Zn(2+) as a cofactor.

It is found in the mitochondrion inner membrane. Its function is as follows. Protease that is part of the quality control system in the inner membrane of mitochondria. Metalloendopeptidase that modulates the oxidative phosphorylation (OXPHOS) system and plant growth. Involved in tolerance mechanisms to heat, osmotic and oxidative stresses. The chain is Mitochondrial metalloendopeptidase OMA1 from Arabidopsis thaliana (Mouse-ear cress).